A 461-amino-acid chain; its full sequence is Peptidyl-prolyl cis-trans isomerase-like 4 (461 aa).

The region spanning 1-171 is the PPIase cyclophilin-type domain; that stretch reads MSVLLETSLG…KDIRIRHTVI (171 aa). The stretch at 205 to 234 forms a coiled coil; sequence EELDDNMDEESMEKLRREREARAQALTLEM. The RRM domain maps to 248–326; that stretch reads NVLFVCKLNP…HRIHVDFSQS (79 aa). A disordered region spans residues 341 to 461; the sequence is KRSGQRGGFG…DERYRERRRR (121 aa). Basic and acidic residues-rich tracts occupy residues 365–384 and 398–461; these read DNAR…GDKA and SNRD…RRRR.

Belongs to the cyclophilin-type PPIase family. PPIL4 subfamily.

The protein resides in the nucleus. It catalyses the reaction [protein]-peptidylproline (omega=180) = [protein]-peptidylproline (omega=0). PPIases accelerate the folding of proteins. It catalyzes the cis-trans isomerization of proline imidic peptide bonds in oligopeptides. This chain is Peptidyl-prolyl cis-trans isomerase-like 4 (cyp6), found in Aspergillus oryzae (strain ATCC 42149 / RIB 40) (Yellow koji mold).